Consider the following 103-residue polypeptide: N(4)-acetylcytidine amidohydrolase (103 aa).

The ASCH domain occupies 6-100 (ITFFQRFQDD…GESQFYVIEF (95 aa)). K21 functions as the Proton acceptor in the catalytic mechanism. T24 (nucleophile) is an active-site residue. The active-site Proton donor is E74.

This sequence belongs to the N(4)-acetylcytidine amidohydrolase family.

The catalysed reaction is N(4)-acetylcytidine + H2O = cytidine + acetate + H(+). The enzyme catalyses N(4)-acetyl-2'-deoxycytidine + H2O = 2'-deoxycytidine + acetate + H(+). It catalyses the reaction N(4)-acetylcytosine + H2O = cytosine + acetate + H(+). Catalyzes the hydrolysis of N(4)-acetylcytidine (ac4C). This chain is N(4)-acetylcytidine amidohydrolase, found in Klebsiella pneumoniae subsp. pneumoniae (strain ATCC 700721 / MGH 78578).